Here is a 209-residue protein sequence, read N- to C-terminus: Thiamine-phosphate synthase (209 aa).

Residues Gln36–Lys40 and Asn68 contribute to the 4-amino-2-methyl-5-(diphosphooxymethyl)pyrimidine site. Mg(2+) contacts are provided by Asp69 and Asp87. Thr106 lines the 4-amino-2-methyl-5-(diphosphooxymethyl)pyrimidine pocket. Ser133–Thr135 serves as a coordination point for 2-[(2R,5Z)-2-carboxy-4-methylthiazol-5(2H)-ylidene]ethyl phosphate. Lys136 contacts 4-amino-2-methyl-5-(diphosphooxymethyl)pyrimidine. Gly163 contributes to the 2-[(2R,5Z)-2-carboxy-4-methylthiazol-5(2H)-ylidene]ethyl phosphate binding site.

The protein belongs to the thiamine-phosphate synthase family. Requires Mg(2+) as cofactor.

It catalyses the reaction 2-[(2R,5Z)-2-carboxy-4-methylthiazol-5(2H)-ylidene]ethyl phosphate + 4-amino-2-methyl-5-(diphosphooxymethyl)pyrimidine + 2 H(+) = thiamine phosphate + CO2 + diphosphate. The enzyme catalyses 2-(2-carboxy-4-methylthiazol-5-yl)ethyl phosphate + 4-amino-2-methyl-5-(diphosphooxymethyl)pyrimidine + 2 H(+) = thiamine phosphate + CO2 + diphosphate. The catalysed reaction is 4-methyl-5-(2-phosphooxyethyl)-thiazole + 4-amino-2-methyl-5-(diphosphooxymethyl)pyrimidine + H(+) = thiamine phosphate + diphosphate. Its pathway is cofactor biosynthesis; thiamine diphosphate biosynthesis; thiamine phosphate from 4-amino-2-methyl-5-diphosphomethylpyrimidine and 4-methyl-5-(2-phosphoethyl)-thiazole: step 1/1. Its function is as follows. Condenses 4-methyl-5-(beta-hydroxyethyl)thiazole monophosphate (THZ-P) and 2-methyl-4-amino-5-hydroxymethyl pyrimidine pyrophosphate (HMP-PP) to form thiamine monophosphate (TMP). In Pseudomonas aeruginosa (strain UCBPP-PA14), this protein is Thiamine-phosphate synthase.